Reading from the N-terminus, the 824-residue chain is Probable acyl-CoA dehydrogenase IBR3 (824 aa).

G2 is subject to N-acetylglycine. FAD contacts are provided by residues 555 to 565 (FAMTEPQVASS), 589 to 591 (WTS), R706, Q776, and 776 to 780 (QVHGA). The short motif at 822 to 824 (SKL) is the Microbody targeting signal element.

This sequence belongs to the acyl-CoA dehydrogenase family. It depends on FAD as a cofactor.

It is found in the peroxisome. The enzyme catalyses a 2,3-saturated acyl-CoA + A = a 2,3-dehydroacyl-CoA + AH2. In terms of biological role, involved with IBR1 and IBR10 in the peroxisomal beta-oxidation of indole-3-butyric acid (IBA) to form indole-3-acetic acid (IAA), a biologically active auxin. May be responsible for catalyzing the first step in IBA-CoA beta-oxidation. May play a role in defense response to pathogenic bacteria. In Arabidopsis thaliana (Mouse-ear cress), this protein is Probable acyl-CoA dehydrogenase IBR3.